Consider the following 212-residue polypeptide: Stage 0 sporulation protein A (212 aa).

A Response regulatory domain is found at 5-123 (EVLLADDNRE…VLAQRIRQII (119 aa)). Positions 10, 11, and 56 each coordinate Ca(2+). Asp-56 carries the 4-aspartylphosphate modification. The H-T-H motif DNA-binding region spans 194–212 (PDIAKKFNTTASHVERAIR).

Ca(2+) is required as a cofactor. In terms of processing, phosphorylated by KinA and KinB.

The protein localises to the cytoplasm. Its function is as follows. May play the central regulatory role in sporulation. It may be an element of the effector pathway responsible for the activation of sporulation genes in response to nutritional stress. Spo0A may act in concert with Spo0H (a sigma factor) to control the expression of some genes that are critical to the sporulation process. Repressor of abrB, activator of the spoIIa operon. Binds the DNA sequence 5'-TGNCGAA-3' (0A box). This chain is Stage 0 sporulation protein A (spo0A), found in Brevibacillus parabrevis.